We begin with the raw amino-acid sequence, 152 residues long: Transcriptional regulator MraZ (152 aa).

SpoVT-AbrB domains follow at residues 5-52 (ASAI…PIQE) and 81-124 (AHEC…DEAA).

The protein belongs to the MraZ family. As to quaternary structure, forms oligomers.

The protein resides in the cytoplasm. Its subcellular location is the nucleoid. In Shewanella halifaxensis (strain HAW-EB4), this protein is Transcriptional regulator MraZ.